An 84-amino-acid chain; its full sequence is Putative membrane protein insertion efficiency factor (84 aa).

It belongs to the UPF0161 family.

Its subcellular location is the cell inner membrane. Could be involved in insertion of integral membrane proteins into the membrane. The chain is Putative membrane protein insertion efficiency factor from Shewanella halifaxensis (strain HAW-EB4).